The sequence spans 119 residues: MTKQVKIYHNPRCSKSRETLNLLKENGVEPEVVLYLETPADAATLRDLLKILGMNSARELMRQKEDLYKELNLADSSLSEEALIQAMVDNPKLMERPIVVANGKARIGRPPEQVLEIVG.

Cys13 is a catalytic residue.

The protein belongs to the ArsC family.

This is an uncharacterized protein from Escherichia coli (strain K12).